The primary structure comprises 141 residues: Methane monooxygenase regulatory protein B (141 aa).

The protein belongs to the TmoD/XamoD family. In terms of assembly, the soluble methane monooxygenase (sMMO) consists of four components A/MMOH (composed of alpha/MmoX, beta/MmoY and gamma/MmoZ), B/MMOB (MmoB), C/MMOR (MmoC) and D/MMOD (MmoD).

Its function is as follows. The B protein acts as a regulator of electron flow through the soluble mmo complex, switching the enzyme from an oxidase to a hydroxylase in the presence of the substrate. The chain is Methane monooxygenase regulatory protein B (mmoB) from Methylococcus capsulatus (strain ATCC 33009 / NCIMB 11132 / Bath).